Reading from the N-terminus, the 370-residue chain is Putative methylthioribose-1-phosphate isomerase (370 aa).

Substrate contacts are provided by residues 66–68 (RGA), Arg109, and Gln217. Asp258 functions as the Proton donor in the catalytic mechanism. 268 to 269 (NK) provides a ligand contact to substrate.

It belongs to the eIF-2B alpha/beta/delta subunits family. MtnA subfamily.

It carries out the reaction 5-(methylsulfanyl)-alpha-D-ribose 1-phosphate = 5-(methylsulfanyl)-D-ribulose 1-phosphate. Catalyzes the interconversion of methylthioribose-1-phosphate (MTR-1-P) into methylthioribulose-1-phosphate (MTRu-1-P). This Aeropyrum pernix (strain ATCC 700893 / DSM 11879 / JCM 9820 / NBRC 100138 / K1) protein is Putative methylthioribose-1-phosphate isomerase.